Here is a 524-residue protein sequence, read N- to C-terminus: Bifunctional purine biosynthesis protein PurH (524 aa).

The 145-residue stretch at 1 to 145 (MIKQALLSVS…KNHRDVTVIV (145 aa)) folds into the MGS-like domain.

The protein belongs to the PurH family.

The catalysed reaction is (6R)-10-formyltetrahydrofolate + 5-amino-1-(5-phospho-beta-D-ribosyl)imidazole-4-carboxamide = 5-formamido-1-(5-phospho-D-ribosyl)imidazole-4-carboxamide + (6S)-5,6,7,8-tetrahydrofolate. It carries out the reaction IMP + H2O = 5-formamido-1-(5-phospho-D-ribosyl)imidazole-4-carboxamide. The protein operates within purine metabolism; IMP biosynthesis via de novo pathway; 5-formamido-1-(5-phospho-D-ribosyl)imidazole-4-carboxamide from 5-amino-1-(5-phospho-D-ribosyl)imidazole-4-carboxamide (10-formyl THF route): step 1/1. Its pathway is purine metabolism; IMP biosynthesis via de novo pathway; IMP from 5-formamido-1-(5-phospho-D-ribosyl)imidazole-4-carboxamide: step 1/1. This is Bifunctional purine biosynthesis protein PurH from Cupriavidus taiwanensis (strain DSM 17343 / BCRC 17206 / CCUG 44338 / CIP 107171 / LMG 19424 / R1) (Ralstonia taiwanensis (strain LMG 19424)).